Consider the following 321-residue polypeptide: Malate dehydrogenase (321 aa).

NAD(+) contacts are provided by residues 10 to 15 and Asp34; that span reads GAGQIG. Substrate is bound by residues Arg83 and Arg89. Residues Asn96 and 119 to 121 contribute to the NAD(+) site; that span reads VTN. Residues Asn121 and Arg152 each contribute to the substrate site. The Proton acceptor role is filled by His176.

The protein belongs to the LDH/MDH superfamily. MDH type 3 family.

The catalysed reaction is (S)-malate + NAD(+) = oxaloacetate + NADH + H(+). Its function is as follows. Catalyzes the reversible oxidation of malate to oxaloacetate. The protein is Malate dehydrogenase of Azorhizobium caulinodans (strain ATCC 43989 / DSM 5975 / JCM 20966 / LMG 6465 / NBRC 14845 / NCIMB 13405 / ORS 571).